The primary structure comprises 225 residues: 3-dehydroquinate dehydratase (225 aa).

3-dehydroquinate-binding positions include 30–32 (EWR) and arginine 62. Histidine 118 (proton donor/acceptor) is an active-site residue. Lysine 143 functions as the Schiff-base intermediate with substrate in the catalytic mechanism. 3 residues coordinate 3-dehydroquinate: arginine 186, serine 205, and glutamine 209.

It belongs to the type-I 3-dehydroquinase family. As to quaternary structure, homodimer.

It catalyses the reaction 3-dehydroquinate = 3-dehydroshikimate + H2O. It functions in the pathway metabolic intermediate biosynthesis; chorismate biosynthesis; chorismate from D-erythrose 4-phosphate and phosphoenolpyruvate: step 3/7. In terms of biological role, involved in the third step of the chorismate pathway, which leads to the biosynthesis of aromatic amino acids. Catalyzes the cis-dehydration of 3-dehydroquinate (DHQ) and introduces the first double bond of the aromatic ring to yield 3-dehydroshikimate. This Streptococcus mutans serotype c (strain ATCC 700610 / UA159) protein is 3-dehydroquinate dehydratase.